The chain runs to 170 residues: Probable inactive uracil-DNA glycosylase, mitochondrial (170 aa).

A mitochondrion-targeting transit peptide spans methionine 1–valine 53.

The protein belongs to the uracil-DNA glycosylase (UDG) superfamily. UNG family.

The protein localises to the mitochondrion. Probable inactive paralog of AtUNG (AC Q9LIH6) generated by a gene duplication event and subsequently disrupted by at least two transposon insertions. The polypeptide is Probable inactive uracil-DNA glycosylase, mitochondrial (Arabidopsis thaliana (Mouse-ear cress)).